An 817-amino-acid polypeptide reads, in one-letter code: Verprolin (817 aa).

The span at 1–15 (MAGAPAPPPPPPPPA) shows a compositional bias: pro residues. The tract at residues 1–752 (MAGAPAPPPP…THTNQPDVDV (752 aa)) is disordered. The 18-residue stretch at 30–47 (GRDALLGDIRKGMKLKKA) folds into the WH2 1 domain. The segment covering 37-51 (DIRKGMKLKKAETND) has biased composition (basic and acidic residues). Over residues 62–79 (VSSASGSSGTVSSKGPSM) the composition is skewed to low complexity. Positions 87 to 106 (MGAPQLGDILAGGIPKLKHI) constitute a WH2 2 domain. A glycan (N-linked (GlcNAc...) asparagine) is linked at Asn109. Pro residues predominate over residues 119–180 (SAPPIPGAVP…VPSSPAPPLP (62 aa)). The N-linked (GlcNAc...) asparagine glycan is linked to Asn212. Residues 236 to 245 (PQAPPPPPTP) are compositionally biased toward pro residues. The segment covering 254 to 265 (IKPTDNAVSPPS) has biased composition (polar residues). The segment covering 306-335 (SQPPLPSSAPPIPTSHAPPLPPTAPPPPSL) has biased composition (pro residues). Residues 336–348 (PNVTSAPKKATSA) are compositionally biased toward low complexity. Residue Asn337 is glycosylated (N-linked (GlcNAc...) asparagine). Residues 372-382 (PVPPTLAPPLP) are compositionally biased toward pro residues. The N-linked (GlcNAc...) asparagine glycan is linked to Asn383. The span at 383–395 (NTTSVPPNKASSM) shows a compositional bias: low complexity. A compositionally biased stretch (pro residues) spans 396-407 (PAPPPPPPPPPG). Low complexity predominate over residues 408-422 (AFSTSSALSASSIPL). The span at 423–432 (APLPPPPPPS) shows a compositional bias: pro residues. The segment covering 447 to 469 (LTTNKPSASSKQSKISSSSSSSA) has biased composition (low complexity). The segment covering 502–516 (DKQEDVIGSSKDDNV) has biased composition (basic and acidic residues). Over residues 518–534 (PSPISPSINPPKQSSQN) the composition is skewed to low complexity. Ser519 is subject to Phosphoserine. Over residues 557 to 579 (APPPHTDAMAPPLPPSAPPPPIT) the composition is skewed to pro residues. Basic and acidic residues predominate over residues 588 to 597 (GDDHTNDKSE). The span at 649–661 (PPSPPVAAAPPLP) shows a compositional bias: pro residues. Polar residues predominate over residues 713 to 737 (MDTGTSNSPSKNLKQRLFSTGGSTL). A Phosphoserine modification is found at Ser762. Residues Asn784 and Asn796 are each glycosylated (N-linked (GlcNAc...) asparagine). A disordered region spans residues 786–806 (SQMPKPRPFQNKTKLYPSGKG).

It belongs to the verprolin family. N-glycosylated.

It is found in the cytoplasm. Its subcellular location is the cytoskeleton. In terms of biological role, involved in cytoskeletal organization and cellular growth. May exert its effects on the cytoskeleton directly, or indirectly via proline-binding proteins (e.g. profilin) or proteins possessing SH3 domains. This is Verprolin (VRP1) from Saccharomyces cerevisiae (strain ATCC 204508 / S288c) (Baker's yeast).